The following is a 382-amino-acid chain: Alcohol dehydrogenase 1 (382 aa).

The Zn(2+) site is built by Cys49, Thr51, His71, Cys101, Cys104, Cys107, Cys115, and Cys179. 2 residues coordinate an alcohol: Thr51 and His71. Thr51 is a binding site for NAD(+). NAD(+) is bound by residues 204–209 (GLGAVG), Asp228, Arg233, Thr275, Val298, 298–300 (VGV), Phe325, and Arg375.

Belongs to the zinc-containing alcohol dehydrogenase family. As to quaternary structure, homodimer. Zn(2+) serves as cofactor.

The protein localises to the cytoplasm. The enzyme catalyses a primary alcohol + NAD(+) = an aldehyde + NADH + H(+). It catalyses the reaction a secondary alcohol + NAD(+) = a ketone + NADH + H(+). Functionally, this protein is responsible for the conversion of alcohols to aldehydes in plants and is important for NAD metabolism during anaerobic respiration. This chain is Alcohol dehydrogenase 1 (ADH1), found in Petunia hybrida (Petunia).